A 240-amino-acid chain; its full sequence is Probable transcriptional regulatory protein HPG27_148 (240 aa).

It belongs to the TACO1 family.

It is found in the cytoplasm. In Helicobacter pylori (strain G27), this protein is Probable transcriptional regulatory protein HPG27_148.